We begin with the raw amino-acid sequence, 290 residues long: Porphobilinogen deaminase (290 aa).

Cys237 carries the S-(dipyrrolylmethanemethyl)cysteine modification.

Belongs to the HMBS family. In terms of assembly, monomer. Dipyrromethane is required as a cofactor.

The enzyme catalyses 4 porphobilinogen + H2O = hydroxymethylbilane + 4 NH4(+). Its pathway is porphyrin-containing compound metabolism; protoporphyrin-IX biosynthesis; coproporphyrinogen-III from 5-aminolevulinate: step 2/4. In terms of biological role, tetrapolymerization of the monopyrrole PBG into the hydroxymethylbilane pre-uroporphyrinogen in several discrete steps. The chain is Porphobilinogen deaminase from Clostridium botulinum (strain 657 / Type Ba4).